A 310-amino-acid polypeptide reads, in one-letter code: MRLISKVLVKTNCLEVGMRRAPQWYSHYSTTAGNARVNKKGSKVVPVLTGLALASIFAKKWYDDSQIKKADVTSVAVDASISAFPKKMGPPQWPFSTQYELIGKGVRCVSSITFKAYGLGIYVAAEDKHLVSEVLDSKFLSQAFIDTAAPPSPENSHQDNLRAALNDPAKAPILINNLLDSGIRLMSKNTPIKAGSFKLLMDGTKKSVLKNPDSQSQDKDRLEAGFQELHDCFRSVKGLVARDDDFFIELNKDCSMNLSYYARKKDEFVILGTVKEPLIGKLLFAHYLAAVDPPSPEARKEVIDALVSLS.

The N-terminal 20 residues, 1–20, are a transit peptide targeting the mitochondrion; that stretch reads MRLISKVLVKTNCLEVGMRR.

It belongs to the AIM18/AIM46 family.

Its subcellular location is the mitochondrion. The chain is Altered inheritance of mitochondria protein 46, mitochondrial (AIM46) from Saccharomyces cerevisiae (strain YJM789) (Baker's yeast).